A 263-amino-acid chain; its full sequence is TLC domain-containing protein 4 (263 aa).

The next 4 helical transmembrane spans lie at 7-27, 53-73, 90-110, and 124-144; these read LLISVTCISFFTFQLLFYFVS, VVSTCHSLVVGIFGLYIFLFD, VNIAIASGYLISDLSIIILYW, and ASLYAYYLVLKNGVLAYIGNF. In terms of domain architecture, TLC spans 44–246; the sequence is KKKIEWNSRV…ISKGCIKVIS (203 aa). An N6-acetyllysine modification is found at lysine 165. 2 helical membrane-spanning segments follow: residues 173 to 193 and 211 to 231; these read IVINGILMTVVFFIVRIASML and LGVLIQLSWVISCVVLDVMNV.

Belongs to the TLCD4 family.

It localises to the membrane. This chain is TLC domain-containing protein 4, found in Homo sapiens (Human).